The chain runs to 311 residues: Olfactory receptor 5M8 (311 aa).

At 1 to 24 (MRRNCTLVTEFILLGLTSRRELQI) the chain is on the extracellular side. N-linked (GlcNAc...) asparagine glycosylation is present at asparagine 4. Residues 25 to 45 (LLFTLFLAIYMVTVAGNLGMI) traverse the membrane as a helical segment. At 46-53 (VLIQANAW) the chain is on the cytoplasmic side. Residues 54 to 74 (LHMPMYFFLSHLSFVDLCFSS) traverse the membrane as a helical segment. Over 75 to 98 (NVTPKMLEIFLSEKKSISYPACLV) the chain is Extracellular. A disulfide bridge connects residues cysteine 96 and cysteine 188. Residues 99–119 (QCYLFIALVHVEIYILAVMAF) form a helical membrane-spanning segment. The Cytoplasmic portion of the chain corresponds to 120 to 138 (DRYMAICNPLLYGSRMSKS). Residues 139–159 (VCSFLITVPYVYGALTGLMET) traverse the membrane as a helical segment. At 160-195 (MWTYNLAFCGPNEINHFYCADPPLIKLACSDTYNKE) the chain is on the extracellular side. A helical membrane pass occupies residues 196 to 216 (LSMFIVAGWNLSFSLFIICIS). Residues 217–236 (YLYIFPAILKIRSTEGRQKA) lie on the Cytoplasmic side of the membrane. The helical transmembrane segment at 237-257 (FSTCGSHLTAVTIFYATLFFM) threads the bilayer. Topologically, residues 258–270 (YLRPPSKESVEQG) are extracellular. Residues 271 to 291 (KMVAVFYTTVIPMLNLIIYSL) traverse the membrane as a helical segment. Topologically, residues 292-311 (RNKNVKEALIKELSMKIYFS) are cytoplasmic.

Belongs to the G-protein coupled receptor 1 family.

The protein localises to the cell membrane. Its function is as follows. Odorant receptor. The protein is Olfactory receptor 5M8 (OR5M8) of Homo sapiens (Human).